Here is a 221-residue protein sequence, read N- to C-terminus: Large ribosomal subunit protein bL25 (221 aa).

The interval 174 to 221 (SVVTVVPPTDEPTEEEVEAMEGEAATEEPEVVGEEKEEDSEEENKDEE) is disordered. Over residues 184-221 (EPTEEEVEAMEGEAATEEPEVVGEEKEEDSEEENKDEE) the composition is skewed to acidic residues.

It belongs to the bacterial ribosomal protein bL25 family. CTC subfamily. Part of the 50S ribosomal subunit; part of the 5S rRNA/L5/L18/L25 subcomplex. Contacts the 5S rRNA. Binds to the 5S rRNA independently of L5 and L18.

Its function is as follows. This is one of the proteins that binds to the 5S RNA in the ribosome where it forms part of the central protuberance. The chain is Large ribosomal subunit protein bL25 from Staphylococcus haemolyticus (strain JCSC1435).